The following is a 326-amino-acid chain: Acetyl-coenzyme A carboxylase carboxyl transferase subunit alpha (326 aa).

In terms of domain architecture, CoA carboxyltransferase C-terminal spans 44–298 (QLESRAEQLR…KEALLFHLNT (255 aa)).

The protein belongs to the AccA family. As to quaternary structure, acetyl-CoA carboxylase is a heterohexamer composed of biotin carboxyl carrier protein (AccB), biotin carboxylase (AccC) and two subunits each of ACCase subunit alpha (AccA) and ACCase subunit beta (AccD).

Its subcellular location is the cytoplasm. The catalysed reaction is N(6)-carboxybiotinyl-L-lysyl-[protein] + acetyl-CoA = N(6)-biotinyl-L-lysyl-[protein] + malonyl-CoA. Its pathway is lipid metabolism; malonyl-CoA biosynthesis; malonyl-CoA from acetyl-CoA: step 1/1. In terms of biological role, component of the acetyl coenzyme A carboxylase (ACC) complex. First, biotin carboxylase catalyzes the carboxylation of biotin on its carrier protein (BCCP) and then the CO(2) group is transferred by the carboxyltransferase to acetyl-CoA to form malonyl-CoA. The protein is Acetyl-coenzyme A carboxylase carboxyl transferase subunit alpha of Synechocystis sp. (strain ATCC 27184 / PCC 6803 / Kazusa).